Reading from the N-terminus, the 2219-residue chain is RNA-directed RNA polymerase L (2219 aa).

Residues 26–289 (KLAFLVQTEP…TTEDDVEYLI (264 aa)) are endonuclease. Mn(2+) is bound by residues Glu51, Asp89, and Glu102. Lys115 is an active-site residue. Residues 1177-1373 (LSMKLNVSLA…YMSDQLNKFV (197 aa)) enclose the RdRp catalytic domain. Asp1335 is a binding site for Mg(2+).

Belongs to the Bunyavirales RNA polymerase family. As to quaternary structure, homomultimer; the oligomeric structure is essential for the polymerase activity. Interacts with nucleoprotein N. Interacts with protein Z; this interaction inhibits viral transcription and replication, Z partially blocks the product exit tunnel for the releasing nascent RNA product. Requires Mn(2+) as cofactor. The cofactor is Mg(2+).

Its subcellular location is the virion. The protein localises to the host cytoplasm. It carries out the reaction RNA(n) + a ribonucleoside 5'-triphosphate = RNA(n+1) + diphosphate. Functionally, RNA-dependent RNA polymerase, which is responsible for the replication and transcription of the viral RNA genome using antigenomic RNA as an intermediate. During transcription, synthesizes subgenomic RNAs and assures their capping by a cap-snatching mechanism, which involves the endonuclease activity cleaving the host capped pre-mRNAs. These short capped RNAs are then used as primers for viral transcription. The 3'-end of subgenomic mRNAs molecules are heterogeneous and not polyadenylated. The replicase function is to direct synthesis of antigenomic and genomic RNA which are encapsidated and non capped. As a consequence of the use of the same enzyme for both transcription and replication, these mechanisms need to be well coordinated. These processes may be regulated by proteins N and Z in a dose-dependent manner. Z protein inhibits the viral polymerase L und thus the viral transcription and RNA synthesis. The polypeptide is RNA-directed RNA polymerase L (Homo sapiens (Human)).